We begin with the raw amino-acid sequence, 209 residues long: Regulator of G-protein signaling 1 (209 aa).

The 116-residue stretch at 85-200 (SLEKLLANQT…LKSDIYLNLL (116 aa)) folds into the RGS domain.

As to quaternary structure, interacts with GNAI1 and GNAQ. In terms of tissue distribution, detected in peripheral blood monocytes. Expression is relatively low in B-cells and chronic lymphocytic leukemia B-cells; however, in other types of malignant B-cell such as non-Hodgkin lymphoma and hairy cell leukemia, expression is constitutively high.

It is found in the cell membrane. It localises to the cytoplasm. The protein localises to the cytosol. Regulates G protein-coupled receptor signaling cascades, including signaling downstream of the N-formylpeptide chemoattractant receptors and leukotriene receptors. Inhibits B cell chemotaxis toward CXCL12. Inhibits signal transduction by increasing the GTPase activity of G protein alpha subunits thereby driving them into their inactive GDP-bound form. The protein is Regulator of G-protein signaling 1 (RGS1) of Homo sapiens (Human).